The sequence spans 348 residues: Protein RecA (348 aa).

69-76 (GPESSGKT) is a binding site for ATP.

It belongs to the RecA family.

Its subcellular location is the cytoplasm. Can catalyze the hydrolysis of ATP in the presence of single-stranded DNA, the ATP-dependent uptake of single-stranded DNA by duplex DNA, and the ATP-dependent hybridization of homologous single-stranded DNAs. It interacts with LexA causing its activation and leading to its autocatalytic cleavage. The sequence is that of Protein RecA from Picosynechococcus sp. (strain ATCC 27264 / PCC 7002 / PR-6) (Agmenellum quadruplicatum).